Consider the following 151-residue polypeptide: uncharacterized protein (151 aa).

A Response regulatory domain is found at 2-133; the sequence is KTLIVEDNPK…VFVEAVHYSQ (132 aa). Asp-53 is subject to 4-aspartylphosphate.

This is an uncharacterized protein from Sinorhizobium fredii (strain NBRC 101917 / NGR234).